The following is a 147-amino-acid chain: UPF0735 ACT domain-containing protein BPUM_2431 (147 aa).

The ACT domain occupies 70 to 145; sequence TLFFHLEDRS…FVEKVEILGS (76 aa).

Belongs to the UPF0735 family.

In Bacillus pumilus (strain SAFR-032), this protein is UPF0735 ACT domain-containing protein BPUM_2431.